A 631-amino-acid chain; its full sequence is Glycosyltransferase-like protein LARGE (631 aa).

Residues 1–6 are Cytoplasmic-facing; the sequence is MQSNYS. A helical; Signal-anchor for type II membrane protein membrane pass occupies residues 7–27; that stretch reads ISYFLLILFTGTSSYFTIWNF. At 28–631 the chain is on the lumenal side; it reads VDHTRVGAFP…TASRLGIKLR (604 aa). N-linked (GlcNAc...) asparagine glycans are attached at residues N95, N105, N167, N177, N287, N400, N485, N502, N521, N529, and N593.

This sequence belongs to the glycosyltransferase 8 family.

The protein resides in the golgi apparatus membrane. Probable glycosyltransferase. The polypeptide is Glycosyltransferase-like protein LARGE (lge-1) (Caenorhabditis elegans).